A 256-amino-acid polypeptide reads, in one-letter code: uncharacterized protein (256 aa).

9–33 (VTGGGQGIGAAIAQLFAENGMKVVI) is a binding site for NADP(+). Ser140 is a substrate binding site. Residue Tyr153 is the Proton acceptor of the active site.

The protein belongs to the short-chain dehydrogenases/reductases (SDR) family.

This is an uncharacterized protein from Thermotoga maritima (strain ATCC 43589 / DSM 3109 / JCM 10099 / NBRC 100826 / MSB8).